The primary structure comprises 296 residues: tRNA dimethylallyltransferase (296 aa).

Residue 19–26 (GPTASGKS) coordinates ATP. Position 21–26 (21–26 (TASGKS)) interacts with substrate.

Belongs to the IPP transferase family. Monomer. Mg(2+) serves as cofactor.

The catalysed reaction is adenosine(37) in tRNA + dimethylallyl diphosphate = N(6)-dimethylallyladenosine(37) in tRNA + diphosphate. Functionally, catalyzes the transfer of a dimethylallyl group onto the adenine at position 37 in tRNAs that read codons beginning with uridine, leading to the formation of N6-(dimethylallyl)adenosine (i(6)A). In Dinoroseobacter shibae (strain DSM 16493 / NCIMB 14021 / DFL 12), this protein is tRNA dimethylallyltransferase.